We begin with the raw amino-acid sequence, 229 residues long: Flagellar L-ring protein (229 aa).

An N-terminal signal peptide occupies residues 1–25; sequence MKQVRLLPSAPVRAVCALAVAALAG. Cys-26 carries N-palmitoyl cysteine lipidation. A lipid anchor (S-diacylglycerol cysteine) is attached at Cys-26.

The protein belongs to the FlgH family. In terms of assembly, the basal body constitutes a major portion of the flagellar organelle and consists of four rings (L,P,S, and M) mounted on a central rod.

Its subcellular location is the cell outer membrane. The protein resides in the bacterial flagellum basal body. Assembles around the rod to form the L-ring and probably protects the motor/basal body from shearing forces during rotation. In Burkholderia ambifaria (strain MC40-6), this protein is Flagellar L-ring protein.